A 917-amino-acid polypeptide reads, in one-letter code: Translation initiation factor IF-2 (917 aa).

Residues 102 to 249 (EKSQAEEQAL…KWTAEPKAPE (148 aa)) show a composition bias toward basic and acidic residues. Residues 102-326 (EKSQAEEQAL…KSSTLQQGFH (225 aa)) are disordered. The span at 279–293 (RRGRTAKAPRAKKNN) shows a compositional bias: basic residues. Over residues 294–306 (RHSEKADREEARA) the composition is skewed to basic and acidic residues. One can recognise a tr-type G domain in the interval 416-585 (SRAPVVTIMG…LLQAEVLELK (170 aa)). Residues 425 to 432 (GHVDHGKT) are G1. Position 425 to 432 (425 to 432 (GHVDHGKT)) interacts with GTP. Positions 450 to 454 (GITQH) are G2. The segment at 471-474 (DTPG) is G3. Residues 471–475 (DTPGH) and 525–528 (NKID) each bind GTP. The interval 525–528 (NKID) is G4. A G5 region spans residues 561 to 563 (SAK).

Belongs to the TRAFAC class translation factor GTPase superfamily. Classic translation factor GTPase family. IF-2 subfamily.

Its subcellular location is the cytoplasm. Its function is as follows. One of the essential components for the initiation of protein synthesis. Protects formylmethionyl-tRNA from spontaneous hydrolysis and promotes its binding to the 30S ribosomal subunits. Also involved in the hydrolysis of GTP during the formation of the 70S ribosomal complex. This chain is Translation initiation factor IF-2 (infB), found in Proteus vulgaris.